The chain runs to 84 residues: U4-theraphotoxin-Hhn1ac (84 aa).

An N-terminal signal peptide occupies residues 1-22 (MKVTLIAILTCAAVLVLHTTAA). Positions 23–47 (EELEESQLMEVGMPDTELAAVDEER) are excised as a propeptide. Intrachain disulfides connect C51–C65, C55–C76, and C70–C81.

The protein belongs to the neurotoxin 12 (Hwtx-2) family. 02 (Hwtx-2) subfamily. In terms of tissue distribution, expressed by the venom gland.

Its subcellular location is the secreted. In terms of biological role, postsynaptic neurotoxin. The protein is U4-theraphotoxin-Hhn1ac of Cyriopagopus hainanus (Chinese bird spider).